The chain runs to 84 residues: Protein Ac76 (84 aa).

In terms of assembly, interacts with protein Ac75.

It is found in the host cytoplasm. The protein localises to the host nucleus. Functionally, plays an essential role in budded virion (BV) and occluded derived virion (ODV) development. Participates in intranuclear microvesicle formation, ODV envelopment, and subsequent embedding of virions into occlusion bodies. The protein is Protein Ac76 (Ac76) of Lepidoptera (butterflies and moths).